Here is a 329-residue protein sequence, read N- to C-terminus: Glycerol-3-phosphate dehydrogenase [NAD(P)+] (329 aa).

Residues S13, W14, H34, and K105 each contribute to the NADPH site. 3 residues coordinate sn-glycerol 3-phosphate: K105, G134, and S136. Position 138 (A138) interacts with NADPH. 5 residues coordinate sn-glycerol 3-phosphate: K189, D242, S252, R253, and N254. K189 serves as the catalytic Proton acceptor. An NADPH-binding site is contributed by R253. Residues V277 and E279 each contribute to the NADPH site.

This sequence belongs to the NAD-dependent glycerol-3-phosphate dehydrogenase family.

The protein resides in the cytoplasm. The enzyme catalyses sn-glycerol 3-phosphate + NAD(+) = dihydroxyacetone phosphate + NADH + H(+). It catalyses the reaction sn-glycerol 3-phosphate + NADP(+) = dihydroxyacetone phosphate + NADPH + H(+). Its pathway is membrane lipid metabolism; glycerophospholipid metabolism. In terms of biological role, catalyzes the reduction of the glycolytic intermediate dihydroxyacetone phosphate (DHAP) to sn-glycerol 3-phosphate (G3P), the key precursor for phospholipid synthesis. This chain is Glycerol-3-phosphate dehydrogenase [NAD(P)+], found in Legionella pneumophila (strain Paris).